A 292-amino-acid chain; its full sequence is 2,3-dihydroxybenzoate decarboxylase (292 aa).

Cys263 is an active-site residue.

It belongs to the metallo-dependent hydrolases superfamily. In terms of assembly, homotetramer.

It catalyses the reaction 2,3-dihydroxybenzoate + H(+) = catechol + CO2. Its pathway is aromatic compound metabolism; benzoate degradation via hydroxylation. This Aspergillus niger protein is 2,3-dihydroxybenzoate decarboxylase.